The chain runs to 232 residues: U-scoloptoxin(11)-Ssd2a (232 aa).

The N-terminal stretch at 1-21 (MFQFCLLILLLAPGRFFSALG) is a signal peptide. Positions 22 to 32 (KPQETLTVENR) are excised as a propeptide.

Contains 8 disulfide bonds. In terms of tissue distribution, expressed by the venom gland.

The protein localises to the secreted. This is U-scoloptoxin(11)-Ssd2a from Scolopendra dehaani (Thai centipede).